A 544-amino-acid chain; its full sequence is Methyl-accepting chemotaxis protein McpP (544 aa).

3 consecutive transmembrane segments (helical) span residues 12 to 32, 50 to 70, and 192 to 212; these read RLWL…LLML, VVQT…AGTL, and DASL…MLIA. Residues 213–267 enclose the HAMP domain; that stretch reads RSIARPLQEAVQAMGNIASGESDLTRRLDTHGSDEITHLGEHFNRFNGKLQGVVG. Residues 272–508 enclose the Methyl-accepting transducer domain; that stretch reads AAHALAQSAG…EINRNVLDTA (237 aa).

It belongs to the methyl-accepting chemotaxis (MCP) protein family.

It localises to the cell membrane. Functionally, chemotactic-signal transducers respond to changes in the concentration of attractants and repellents in the environment, transduce a signal from the outside to the inside of the cell, and facilitate sensory adaptation through the variation of the level of methylation. McpP is a chemoreceptor that responds specifically to some C2 and C3 carboxylic acids. Recognizes acetate, pyruvate, propionate, and L-lactate. This Pseudomonas putida (strain ATCC 47054 / DSM 6125 / CFBP 8728 / NCIMB 11950 / KT2440) protein is Methyl-accepting chemotaxis protein McpP.